The primary structure comprises 289 residues: Lipoyl synthase 1 (289 aa).

[4Fe-4S] cluster is bound by residues Cys33, Cys38, Cys44, Cys59, Cys63, Cys66, and Ser274. One can recognise a Radical SAM core domain in the interval 45–263 (FAGGTATFLI…RIGEEELGFL (219 aa)).

The protein belongs to the radical SAM superfamily. Lipoyl synthase family. [4Fe-4S] cluster serves as cofactor.

It localises to the cytoplasm. It catalyses the reaction [[Fe-S] cluster scaffold protein carrying a second [4Fe-4S](2+) cluster] + N(6)-octanoyl-L-lysyl-[protein] + 2 oxidized [2Fe-2S]-[ferredoxin] + 2 S-adenosyl-L-methionine + 4 H(+) = [[Fe-S] cluster scaffold protein] + N(6)-[(R)-dihydrolipoyl]-L-lysyl-[protein] + 4 Fe(3+) + 2 hydrogen sulfide + 2 5'-deoxyadenosine + 2 L-methionine + 2 reduced [2Fe-2S]-[ferredoxin]. It functions in the pathway protein modification; protein lipoylation via endogenous pathway; protein N(6)-(lipoyl)lysine from octanoyl-[acyl-carrier-protein]: step 2/2. Its function is as follows. Catalyzes the radical-mediated insertion of two sulfur atoms into the C-6 and C-8 positions of the octanoyl moiety bound to the lipoyl domains of lipoate-dependent enzymes, thereby converting the octanoylated domains into lipoylated derivatives. The polypeptide is Lipoyl synthase 1 (Parasynechococcus marenigrum (strain WH8102)).